Consider the following 479-residue polypeptide: Transmembrane protein 161A (479 aa).

A signal peptide spans 1–28; that stretch reads MAVLGVQLVVTLLTATLMHRLAPHCSFA. The Extracellular segment spans residues 29-98; sequence RWLLCNGSLF…LTTVDALVLR (70 aa). The N-linked (GlcNAc...) asparagine glycan is linked to N34. S69 bears the Phosphoserine mark. Residues 99 to 119 form a helical membrane-spanning segment; sequence FFLEYQWFVDFAVYSGGVYLF. Over 120–134 the chain is Cytoplasmic; sequence TEAYYYMLGPAKETN. A helical transmembrane segment spans residues 135 to 155; that stretch reads IAVFWCLLTVTFSIKMFLTVT. The Extracellular segment spans residues 156 to 166; that stretch reads RLYFSAEEGGE. A helical membrane pass occupies residues 167 to 187; that stretch reads RSVCLTFAFLFLLLAMLVQVV. Residues 188 to 224 are Cytoplasmic-facing; the sequence is REETLELGLEPGLASMTQNLEPLLKKQGWDWALPVAK. Residues 225–245 form a helical membrane-spanning segment; it reads LAIRVGLAVVGSVLGAFLTFP. Residues 246-263 lie on the Extracellular side of the membrane; the sequence is GLRLAQTHRDALTMSEDR. A helical transmembrane segment spans residues 264–284; it reads PMLQFLLHTSFLSPLFILWLW. At 285–304 the chain is on the cytoplasmic side; the sequence is TKPIARDFLHQPPFGETRFS. The chain crosses the membrane as a helical span at residues 305 to 325; it reads LLSDSAFDSGRLWLLVVLCLL. Residues 326–370 are Extracellular-facing; that stretch reads RLAVTRPHLQAYLCLAKARVEQLRREAGRIEAREIQQRVVRVYCY. A helical transmembrane segment spans residues 371–391; it reads VTVVSLQYLTPLILTLNCTLL. At 392–449 the chain is on the cytoplasmic side; that stretch reads LKTLGGYSWGLGPAPLLSPDPSSASAAPIGSGEDEVQQTAARIAGALGGLLTPLFLRG. Residues 450–470 form a helical membrane-spanning segment; it reads VLAYLIWWTAACQLLASLFGL. Residues 471 to 479 are Extracellular-facing; the sequence is YFHQHLAGS.

It belongs to the TMEM161 family.

The protein resides in the membrane. Its function is as follows. May play a role in protection against oxidative stress. Overexpression leads to reduced levels of oxidant-induced DNA damage and apoptosis. The sequence is that of Transmembrane protein 161A (TMEM161A) from Homo sapiens (Human).